We begin with the raw amino-acid sequence, 298 residues long: HTH-type transcriptional regulator CzcR (298 aa).

The HTH lysR-type domain occupies 11–68; that stretch reads MELRDLQIFQSVADQGSVSSAAKELNYVQSNVTARIKQLENELKTPLFYRHKRGMTLT. The H-T-H motif DNA-binding region spans 28 to 47; it reads VSSAAKELNYVQSNVTARIK.

It belongs to the LysR transcriptional regulatory family.

This Bacillus thuringiensis (strain Al Hakam) protein is HTH-type transcriptional regulator CzcR (czcR).